A 273-amino-acid chain; its full sequence is DNA replication complex GINS protein psf2 (273 aa).

Disordered regions lie at residues Lys-88–Gly-110 and Ala-240–Leu-273. Over residues Ala-244 to Gly-257 the composition is skewed to basic and acidic residues. Over residues Gly-261–Leu-273 the composition is skewed to acidic residues.

The protein belongs to the GINS2/PSF2 family. Component of the GINS complex which is a heterotetramer of div-26/sld5, drc-1/psf1, drc-2/psf2 and drc-3/psf3.

It localises to the nucleus. Its function is as follows. The GINS complex plays an essential role in the initiation of DNA replication. Has a role in chromosome segregation. This Neurospora crassa (strain ATCC 24698 / 74-OR23-1A / CBS 708.71 / DSM 1257 / FGSC 987) protein is DNA replication complex GINS protein psf2 (drc-2).